Here is a 313-residue protein sequence, read N- to C-terminus: L-lactate dehydrogenase (313 aa).

Residues Val-11, Asp-32, Arg-37, Tyr-62, and Gly-76–Val-77 contribute to the NAD(+) site. Substrate-binding positions include Gln-79, Arg-85, and Asn-117–Asp-120. NAD(+) contacts are provided by residues Ala-115–Asn-117 and Ser-143. Asp-148–Arg-151 serves as a coordination point for substrate. Positions 153 and 168 each coordinate beta-D-fructose 1,6-bisphosphate. The active-site Proton acceptor is His-175. A Phosphotyrosine modification is found at Tyr-221. Thr-230 lines the substrate pocket.

Belongs to the LDH/MDH superfamily. LDH family. In terms of assembly, homotetramer.

The protein localises to the cytoplasm. It carries out the reaction (S)-lactate + NAD(+) = pyruvate + NADH + H(+). It participates in fermentation; pyruvate fermentation to lactate; (S)-lactate from pyruvate: step 1/1. Its activity is regulated as follows. Allosterically activated by fructose 1,6-bisphosphate (FBP). Its function is as follows. Catalyzes the conversion of lactate to pyruvate. This chain is L-lactate dehydrogenase, found in Geotalea daltonii (strain DSM 22248 / JCM 15807 / FRC-32) (Geobacter daltonii).